The primary structure comprises 230 residues: Peptidyl-prolyl cis-trans isomerase Mip (230 aa).

A signal peptide spans 1–21 (MKRLILPFLSVGLLLGTTAHA). The 89-residue stretch at 142–230 (NDEVTVNYEG…KVNLISVKKK (89 aa)) folds into the PPIase FKBP-type domain.

This sequence belongs to the FKBP-type PPIase family.

Its subcellular location is the secreted. The enzyme catalyses [protein]-peptidylproline (omega=180) = [protein]-peptidylproline (omega=0). Its function is as follows. May be an essential virulence factor associated with macrophage infectivity. Exhibits PPIase activity. The protein is Peptidyl-prolyl cis-trans isomerase Mip (mip) of Coxiella burnetii (strain RSA 493 / Nine Mile phase I).